The sequence spans 539 residues: CTP synthase (539 aa).

Residues 1–268 (MADTKYIFVT…DETVLRKVGL (268 aa)) form an amidoligase domain region. Ser15 is a CTP binding site. A UTP-binding site is contributed by Ser15. 16 to 21 (SLGKGI) provides a ligand contact to ATP. Position 56 (Tyr56) interacts with L-glutamine. Residue Asp73 participates in ATP binding. Asp73 and Glu143 together coordinate Mg(2+). CTP-binding positions include 150-152 (DIE), 189-194 (KTKPTQ), and Lys225. UTP contacts are provided by residues 189-194 (KTKPTQ) and Lys225. Residues 294–536 (TIALVGKYVE…IREAIKTRKK (243 aa)) enclose the Glutamine amidotransferase type-1 domain. Gly356 is a binding site for L-glutamine. The active-site Nucleophile; for glutamine hydrolysis is Cys383. L-glutamine-binding positions include 384–387 (LGMQ), Glu407, and Arg464. Residues His509 and Glu511 contribute to the active site.

It belongs to the CTP synthase family. As to quaternary structure, homotetramer.

The enzyme catalyses UTP + L-glutamine + ATP + H2O = CTP + L-glutamate + ADP + phosphate + 2 H(+). It catalyses the reaction L-glutamine + H2O = L-glutamate + NH4(+). The catalysed reaction is UTP + NH4(+) + ATP = CTP + ADP + phosphate + 2 H(+). The protein operates within pyrimidine metabolism; CTP biosynthesis via de novo pathway; CTP from UDP: step 2/2. Allosterically activated by GTP, when glutamine is the substrate; GTP has no effect on the reaction when ammonia is the substrate. The allosteric effector GTP functions by stabilizing the protein conformation that binds the tetrahedral intermediate(s) formed during glutamine hydrolysis. Inhibited by the product CTP, via allosteric rather than competitive inhibition. Functionally, catalyzes the ATP-dependent amination of UTP to CTP with either L-glutamine or ammonia as the source of nitrogen. Regulates intracellular CTP levels through interactions with the four ribonucleotide triphosphates. In Porphyromonas gingivalis (strain ATCC BAA-308 / W83), this protein is CTP synthase.